The chain runs to 70 residues: UPF0352 protein Sden_2336 (70 aa).

This sequence belongs to the UPF0352 family.

The sequence is that of UPF0352 protein Sden_2336 from Shewanella denitrificans (strain OS217 / ATCC BAA-1090 / DSM 15013).